Reading from the N-terminus, the 136-residue chain is Small cardioactive peptides (136 aa).

Residues 1 to 24 (METSVSRVTVSLTLLVLIICSADA) form the signal peptide. Methionine 33 and methionine 46 each carry methionine amide. Positions 49–135 (SQMKTETGTD…VLSKLKSLLQ (87 aa)) are cleaved as a propeptide — carboxy-terminal peptide.

This sequence belongs to the SCP family. In terms of processing, contains three disulfide bonds. In terms of tissue distribution, highly expressed in the buccal ganglion.

Its subcellular location is the secreted. In terms of biological role, involved in the stimulation of contractile activity in the gut, the increase of the amplitude of the heart beat, and enhancement of the contractile response of the radula closer muscle. This Aplysia californica (California sea hare) protein is Small cardioactive peptides.